A 358-amino-acid polypeptide reads, in one-letter code: Neuronal-specific septin-3 (358 aa).

The segment covering 1–10 (MSKGLPEART) has biased composition (basic and acidic residues). The disordered stretch occupies residues 1–29 (MSKGLPEARTDTAMSELVPEPRPKPAVPM). The region spanning 58–331 (TGFDFNIMVV…ETYRAKRLND (274 aa)) is the Septin-type G domain. Residues 68–75 (GQSGLGKS) form a G1 motif region. Residue 68–75 (GQSGLGKS) coordinates GTP. Position 91 is a phosphoserine (S91). Residue T102 participates in GTP binding. The tract at residues 125 to 128 (DTPG) is G3 motif. Positions 207 to 210 (AKAD) are G4 motif. GTP contacts are provided by residues 208-216 (KADTMTLEE), G265, and R280.

This sequence belongs to the TRAFAC class TrmE-Era-EngA-EngB-Septin-like GTPase superfamily. Septin GTPase family. Septins polymerize into heterooligomeric protein complexes that form filaments, and can associate with cellular membranes, actin filaments and microtubules. GTPase activity is required for filament formation. Post-translationally, phosphorylated by PKG on serine residues. Phosphorylated by PKG on Ser-91. As to expression, brain-specific, with highest expression in the hippocampal CA3 region (at protein level).

It localises to the cytoplasm. Its subcellular location is the cytoskeleton. The protein localises to the synapse. Filament-forming cytoskeletal GTPase. May play a role in cytokinesis (Potential). The protein is Neuronal-specific septin-3 of Rattus norvegicus (Rat).